Reading from the N-terminus, the 2175-residue chain is MQPTLPQAAGTADMDLTAVQSINDWFFKKEQIYLLAQFWQQRATLAEKEVNTLKEQLSTGNPDSNLNSENSDTAAAAATAAAVAAVVAGATATNDIEDEQQQQLQQTASGGILESDSDKLLNSSIVAAAITLQQQNGSNLLANTNTPSPSPPLLSAEQQQQLQSSLQQSGGVGGACLNPKLFFNHAQQMMMMEAAAAAAAAALQQQQQQQSPLHSPANEVAIPTEQPAATVATGAAAAAAAAATPIATGNVKSGSTTSNANHTNSNNSHQDEEELDDEEEDEEEDEDEDDEEENASMQSNADDMELDAQQETRTEPSATTQQQHQQQDTEDLEENKDAGEASLNVSNNHNTTDSNNSCSRKNNNGGNESEQHVASSAEDDDCANNNTNTSNNNNTSNTATSNTNNNNNNNSSSGNSEKRKKKNNNNNNGQPAVLLAAKDKEIKALLDELQRLRAQEQTHLVQIQRLEEHLEVKRQHIIRLEARLDKQQINEALAEATALSAAASTNNNNNSQSSDNNKKLNTAAERPMDASSNADLPESTKAPVPAEDDEEDEDQAMLVDSEEAEDKPEDSHHDDDEDEDEDREAVNATTTDSNELKIKKEQHSPLDLNVLSPNSAIAAAAAAAAAAACANDPNKFQALLIERTKALAAEALKNGASDALSEDAHHQQQQHHQQQHQHQQQHHQQQHLHQQHHHHLQQQPNSGSNSNPASNDHHHGHHLHGHGLLHPSSAHHLHHQTTESNSNSSTPTAAGNNNGSNNSSSNTNANSTAQLAASLASTLNGTKSLMQEDSNGLAAVAMAAHAQHAAALGPGFLPGLPAFQFAAAQVAAGGDGRGHYRFADSELQLPPGASMAGRLGESLIPKGDPMEAKLQEMLRYNMDKYANQALDTLHISRRVRELLSVHNIGQRLFAKYILGLSQGTVSELLSKPKPWDKLTEKGRDSYRKMHAWACDDNAVMLLKSLIPKKDSGLPQYAGRGAGGAGGDDSMSEDRIAHILSEASSLMKQSSVAQHREQERRSHGGEDSHSNEDSKSPPQSCTSPFFKVENQLKQHQHLNPEQAAAQQREREREQREREQQQRLRHDDQDKMARLYQELIARTPRETAFPSFLFSPSLFGGAAGMPGAASNAFPAMADENMRHVFEREIAKLQQHQQQQQAAQAQAQFPNFSSLMALQQQVLNGAQDLSLAAAAAKDIKLNGQRSSLEHSAGSSSCSKDGERDDAYPSSLHGRKSEGGGTPAPPAPPSGPGTGAGAPPTAAPPTGGASSNSAAPSPLSNSILPPALSSQGEEFAATASPLQRMASITNSLITQPPVTPHHSTPQRPTKAVLPPITQQQFDMFNNLNTEDIVRRVKEALSQYSISQRLFGESVLGLSQGSVSDLLARPKPWHMLTQKGREPFIRMKMFLEDENAVHKLVASQYKIAPEKLMRTGSYSGSPQMPQGLASKMQAASLPMQKMMSELKLQEPAQAQHLMQQMQAAAMSAAMQQQQVAQAQQQAQQAQQAQQHLQQQAQQHLQQQQHLAQQQHPHQQHHQAAAAAAALHHQSMLLTSPGLPPQHAISLPPSAGGAQPGGPGGNQGSSNPSNSEKKPMLMPVHGTNAMRSLHQHMSPTVYEMAALTQDLDTHDITTKIKEALLANNIGQKIFGEAVLGLSQGSVSELLSKPKPWHMLSIKGREPFIRMQLWLSDANNVERLQLLKNERREASKRRRSTGPNQQDNSSDTSSNDTNDFYTSSPGPGSVGSGVGGAPPSKKQRVLFSEEQKEALRLAFALDPYPNVGTIEFLANELGLATRTITNWFHNHRMRLKQQVPHGPAGQDNPIPSRESTSATPFDPVQFRILLQQRLLELHKERMGMSGAPIPYPPYFAAAAILGRSLAGIPGAAAAAGAAAAAAAVGASGGDELQALNQAFKEQMSGLDLSMPTLKRERSDDYQDDLELEGGGHNLSDNESLEGQEPEDKTTDYEKVLHKSALAAAAAYMSNAVRSSRRKPAAPQWVNPAGAVTNPSAVVAAVAAAAAAAADNERIINGVCVMQASEYGRDDTDSNKPTDGGNDSDHEHAQLEIDQRFMEPEVHIKQEEDDDEEQSGSVNLDNEDNATSEQKLKVINEEKLRMVRVRRLSSTGGGSSEEMPAPLAPPPPPPAASSSIVSGESTTSSSSSSNTSSSTPAVTTAAATAAAGWNY.

Disordered regions lie at residues 139–170 and 249–432; these read NLLA…QQSG and GNVK…GQPA. Composition is skewed to low complexity over residues 153–169 and 249–268; these read LLSA…LQQS and GNVK…SNNS. A coiled-coil region spans residues 265 to 343; it reads SNNSHQDEEE…ENKDAGEASL (79 aa). The span at 271-294 shows a compositional bias: acidic residues; sequence DEEELDDEEEDEEEDEDEDDEEEN. The segment covering 309–320 has biased composition (polar residues); that stretch reads QQETRTEPSATT. Residues 344–359 show a composition bias toward low complexity; the sequence is NVSNNHNTTDSNNSCS. Over residues 360-374 the composition is skewed to polar residues; that stretch reads RKNNNGGNESEQHVA. The span at 384-415 shows a compositional bias: low complexity; the sequence is NNNTNTSNNNNTSNTATSNTNNNNNNNSSSGN. Residues 433–499 adopt a coiled-coil conformation; the sequence is VLLAAKDKEI…NEALAEATAL (67 aa). Positions 503-515 are enriched in low complexity; the sequence is ASTNNNNNSQSSD. 2 disordered regions span residues 503-600 and 656-765; these read ASTN…KIKK and ASDA…NTNA. The segment covering 546–568 has biased composition (acidic residues); it reads AEDDEEDEDQAMLVDSEEAEDKP. Basic residues predominate over residues 673–696; that stretch reads QQQHQHQQQHHQQQHLHQQHHHHL. The segment covering 697–710 has biased composition (low complexity); sequence QQQPNSGSNSNPAS. A compositionally biased stretch (basic residues) spans 714-735; the sequence is HHGHHLHGHGLLHPSSAHHLHH. Over residues 738-765 the composition is skewed to low complexity; the sequence is TESNSNSSTPTAAGNNNGSNNSSSNTNA. The CUT 1 DNA-binding region spans 877 to 964; sequence NMDKYANQAL…VMLLKSLIPK (88 aa). 2 disordered regions span residues 1001–1083 and 1197–1289; these read LMKQ…HDDQ and QRSS…EFAA. Composition is skewed to basic and acidic residues over residues 1009 to 1030 and 1062 to 1083; these read QHRE…EDSK and QRER…HDDQ. Positions 1056-1161 form a coiled coil; it reads EQAAAQQRER…QQQAAQAQAQ (106 aa). Low complexity predominate over residues 1249 to 1282; the sequence is GAPPTAAPPTGGASSNSAAPSPLSNSILPPALSS. The segment at residues 1330 to 1417 is a DNA-binding region (CUT 2); sequence QQQFDMFNNL…VHKLVASQYK (88 aa). Positions 1463-1522 form a coiled coil; it reads AQAQHLMQQMQAAAMSAAMQQQQVAQAQQQAQQAQQAQQHLQQQAQQHLQQQQHLAQQQH. Over residues 1507-1540 the composition is skewed to low complexity; the sequence is AQQHLQQQQHLAQQQHPHQQHHQAAAAAAALHHQ. 6 disordered regions span residues 1507-1588, 1695-1747, 1803-1826, 1922-1955, 2069-2097, and 2113-2175; these read AQQH…PMLM, ERRE…PSKK, QVPH…ATPF, RSDD…DKTT, KQEE…QKLK, and SSTG…GWNY. Over residues 1564–1573 the composition is skewed to gly residues; sequence AQPGGPGGNQ. The CUT 3 DNA-binding region spans 1608-1695; the sequence is YEMAALTQDL…VERLQLLKNE (88 aa). Positions 1709-1732 are enriched in low complexity; that stretch reads NQQDNSSDTSSNDTNDFYTSSPGP. A DNA-binding region (homeobox) is located at residues 1745-1804; that stretch reads SKKQRVLFSEEQKEALRLAFALDPYPNVGTIEFLANELGLATRTITNWFHNHRMRLKQQV. Phosphoserine is present on residues Ser1940 and Ser1944. The segment covering 2126-2135 has biased composition (pro residues); sequence PLAPPPPPPA. The segment covering 2136–2175 has biased composition (low complexity); the sequence is ASSSIVSGESTTSSSSSSNTSSSTPAVTTAAATAAAGWNY.

Belongs to the CUT homeobox family. As to expression, detected in many cells in the central nervous system, all external sensory organs, some peripheral neurons, and in the non-neural cells of the spiracles and the Malpighian tubules.

It localises to the nucleus. In terms of biological role, regulator of cell fate decisions in multiple lineages. Specifically, functions as a determination factor that specifies sensory organ identity in precursor cells. Probably also involved in cell type specification of Malpighian tubules. In absence of cut gene external sensory organs are transformed into chordotonal organs. In Drosophila melanogaster (Fruit fly), this protein is Homeobox protein cut (ct).